Reading from the N-terminus, the 318-residue chain is Pyrimidine-specific ribonucleoside hydrolase RihA (318 aa).

The active site involves His240.

This sequence belongs to the IUNH family. RihA subfamily.

Hydrolyzes cytidine or uridine to ribose and cytosine or uracil, respectively. In Shewanella sp. (strain MR-4), this protein is Pyrimidine-specific ribonucleoside hydrolase RihA.